Consider the following 46-residue polypeptide: Protein PsbN (46 aa).

The chain crosses the membrane as a helical span at residues 7-27 (ALSVALGVMAVVLGLTGFGVY).

It belongs to the PsbN family.

The protein resides in the cellular thylakoid membrane. Functionally, may play a role in photosystem I and II biogenesis. In Synechococcus sp. (strain CC9902), this protein is Protein PsbN.